The primary structure comprises 368 residues: Saccharopine dehydrogenase [NAD(+), L-lysine-forming] (368 aa).

L-saccharopine is bound by residues arginine 18 and lysine 77. The active-site Proton acceptor is lysine 77. Phosphoserine is present on serine 85. Histidine 96 (proton donor) is an active-site residue. Glutamine 101 lines the L-saccharopine pocket. Arginine 130 contacts NAD(+). L-saccharopine contacts are provided by arginine 131 and phenylalanine 135. Residues 203-204, aspartate 227, threonine 231, tyrosine 251, and valine 278 each bind NAD(+); that span reads GR. Cysteines 205 and 249 form a disulfide. An L-saccharopine-binding site is contributed by 279 to 281; it reads SCD. 319 to 322 provides a ligand contact to NAD(+); sequence IDHL.

Belongs to the AlaDH/PNT family. As to quaternary structure, monomer.

The enzyme catalyses L-saccharopine + NAD(+) + H2O = L-lysine + 2-oxoglutarate + NADH + H(+). The protein operates within amino-acid biosynthesis; L-lysine biosynthesis via AAA pathway; L-lysine from L-alpha-aminoadipate (fungal route): step 3/3. Catalyzes the NAD(+)-dependent cleavage of saccharopine to L-lysine and 2-oxoglutarate, the final step in the alpha-aminoadipate (AAA) pathway for lysin biosynthesis. This Schizosaccharomyces pombe (strain 972 / ATCC 24843) (Fission yeast) protein is Saccharopine dehydrogenase [NAD(+), L-lysine-forming].